The following is a 200-amino-acid chain: MAGIKQHSGLVVPLDAANVDTDAIIPKQFLQAITRVGFGKHLFHEWRYLDEEGTVPNPKFVLNFPEYQGATILLARKNLGCGSSREHAPWALADYGFKVMIAPSFADIFYNNSLNNHMLPIRLNEEEVEEIFQWVWKNKGCEIHVNLENLTVTTGNKIYHFELDEFRRHCLLNGLDNIGLTLQHEDKIAEYEKNIPAFLR.

The protein belongs to the LeuD family. LeuD type 1 subfamily. As to quaternary structure, heterodimer of LeuC and LeuD.

The catalysed reaction is (2R,3S)-3-isopropylmalate = (2S)-2-isopropylmalate. It participates in amino-acid biosynthesis; L-leucine biosynthesis; L-leucine from 3-methyl-2-oxobutanoate: step 2/4. Its function is as follows. Catalyzes the isomerization between 2-isopropylmalate and 3-isopropylmalate, via the formation of 2-isopropylmaleate. This is 3-isopropylmalate dehydratase small subunit from Histophilus somni (strain 129Pt) (Haemophilus somnus).